Reading from the N-terminus, the 51-residue chain is Large ribosomal subunit protein bL33 (51 aa).

Residues 1-23 (MREKIKLESSAGTGHFYTTTKNK) are disordered. The span at 10–20 (SAGTGHFYTTT) shows a compositional bias: polar residues.

This sequence belongs to the bacterial ribosomal protein bL33 family.

The sequence is that of Large ribosomal subunit protein bL33 from Nitrosomonas eutropha (strain DSM 101675 / C91 / Nm57).